A 578-amino-acid chain; its full sequence is MEVDEEKPQIIAENPNENVIRERNAEIVSGGNVFYNPVQEFNRDLSIAALNVYRQRLTKERSEKALKKQRKKVKEQEDEKTTPVPEDPPVYEAGTRYEDGLRILEALAATGLRSIRYAQEIAGVRQIVANDLSRQAVASINTNIRHNKVEELIEPSHSDAMTLMYLSTQPEKRFDAVDLDPYGCPNRFLDGAMQCLVDGGLLLVTATDMAVLAGNAPEACYVKYGSVPLRMKCCHEMALRILLHCIESHANRYGKYIEPLLSISADFYIRIFVRVYVGQAQCKLSMSKQSWIYQCTGCETFTLQPLGITKPNPTAGNPQQLKFGIPTGPAVNSQCEHCGHRHHLGGPIWSAPIHNPEFVQDLLTAVQETTLQSLGTQRRIVGVLSMVQEELQDVPLYYTPDKLCCVLKLEIVPMLKFRSAILHAGYRVSYSHASKNSLKTNAPPAVLWDILRSWSKRHPVNPERMIPGSPLAAILSKECTAVYEFDELHPEANPKSRKSALSRFQENPTPHWGPGTRATIMIGDNKLPKSYRNQNKKQRHKASEQQAEDDQQDTPQAVDEYDGDVEHLPKQPKLEATA.

Residues Asn-18–Leu-451 form the Trm1 methyltransferase domain. Arg-43 is a binding site for S-adenosyl-L-methionine. Positions Glu-63 to Glu-92 are disordered. Residues Arg-113 and Asp-131 each contribute to the S-adenosyl-L-methionine site. Positions 295, 298, 335, and 338 each coordinate Zn(2+). The disordered stretch occupies residues Glu-491–Ala-578. The segment covering Asp-564 to Ala-578 has biased composition (basic and acidic residues).

This sequence belongs to the class I-like SAM-binding methyltransferase superfamily. Trm1 family.

It catalyses the reaction guanosine(26) in tRNA + 2 S-adenosyl-L-methionine = N(2)-dimethylguanosine(26) in tRNA + 2 S-adenosyl-L-homocysteine + 2 H(+). Functionally, dimethylates a single guanine residue at position 26 of most tRNAs using S-adenosyl-L-methionine as donor of the methyl groups. The chain is tRNA (guanine(26)-N(2))-dimethyltransferase from Drosophila melanogaster (Fruit fly).